Reading from the N-terminus, the 130-residue chain is Large ribosomal subunit protein bL12 (130 aa).

It belongs to the bacterial ribosomal protein bL12 family. As to quaternary structure, homodimer. Part of the ribosomal stalk of the 50S ribosomal subunit. Forms a multimeric L10(L12)X complex, where L10 forms an elongated spine to which 2 to 4 L12 dimers bind in a sequential fashion. Binds GTP-bound translation factors.

Forms part of the ribosomal stalk which helps the ribosome interact with GTP-bound translation factors. Is thus essential for accurate translation. The sequence is that of Large ribosomal subunit protein bL12 from Thermobifida fusca (strain YX).